A 337-amino-acid polypeptide reads, in one-letter code: tRNA N6-adenosine threonylcarbamoyltransferase (337 aa).

Fe cation-binding residues include His-111 and His-115. Substrate is bound by residues 134–138 (LVSGG), Asp-167, Gly-180, and Asn-272. A Fe cation-binding site is contributed by Asp-300.

This sequence belongs to the KAE1 / TsaD family. The cofactor is Fe(2+).

It localises to the cytoplasm. The enzyme catalyses L-threonylcarbamoyladenylate + adenosine(37) in tRNA = N(6)-L-threonylcarbamoyladenosine(37) in tRNA + AMP + H(+). Its function is as follows. Required for the formation of a threonylcarbamoyl group on adenosine at position 37 (t(6)A37) in tRNAs that read codons beginning with adenine. Is involved in the transfer of the threonylcarbamoyl moiety of threonylcarbamoyl-AMP (TC-AMP) to the N6 group of A37, together with TsaE and TsaB. TsaD likely plays a direct catalytic role in this reaction. The protein is tRNA N6-adenosine threonylcarbamoyltransferase of Nitrosomonas europaea (strain ATCC 19718 / CIP 103999 / KCTC 2705 / NBRC 14298).